The primary structure comprises 311 residues: 26S proteasome regulatory subunit RPN11 (311 aa).

In terms of domain architecture, MPN spans 32-167 (VYISSLALLK…IDAFRLISPA (136 aa)). Zn(2+) is bound by residues H114, H116, and D127. The short motif at 114 to 127 (HSHPGFGCWLSSVD) is the JAMM motif element.

This sequence belongs to the peptidase M67A family.

In terms of biological role, acts as a regulatory subunit of the 26 proteasome which is involved in the ATP-dependent degradation of ubiquitinated proteins. The sequence is that of 26S proteasome regulatory subunit RPN11 (RPN11) from Eremothecium gossypii (strain ATCC 10895 / CBS 109.51 / FGSC 9923 / NRRL Y-1056) (Yeast).